We begin with the raw amino-acid sequence, 279 residues long: Energy-coupling factor transporter ATP-binding protein EcfA1 (279 aa).

Residues 6 to 240 (VRLEHVFYKY…ADAMREIGLG (235 aa)) form the ABC transporter domain. Residue 40-47 (GHNGSGKS) participates in ATP binding.

It belongs to the ABC transporter superfamily. Energy-coupling factor EcfA family. As to quaternary structure, forms a stable energy-coupling factor (ECF) transporter complex composed of 2 membrane-embedded substrate-binding proteins (S component), 2 ATP-binding proteins (A component) and 2 transmembrane proteins (T component).

Its subcellular location is the cell membrane. ATP-binding (A) component of a common energy-coupling factor (ECF) ABC-transporter complex. Unlike classic ABC transporters this ECF transporter provides the energy necessary to transport a number of different substrates. This Listeria monocytogenes serovar 1/2a (strain ATCC BAA-679 / EGD-e) protein is Energy-coupling factor transporter ATP-binding protein EcfA1.